A 173-amino-acid polypeptide reads, in one-letter code: Myosin light chain 5 (173 aa).

The disordered stretch occupies residues 1 to 20; that stretch reads MASRKTKKKEGGALRAQRAS. 3 consecutive EF-hand domains span residues 30–65, 100–135, and 136–171; these read TQIQEFKEAFTLMDQNRDGFIDKEDLKDTYASLGKT, DAEETILNAFKMLDPDGKGKINKEYIKRLLMSQADK, and MTAEEVDQMFQFASIDVAGNLDYKALSYVITHGEEK. Ca(2+) contacts are provided by D43, N45, D47, and D54.

In terms of assembly, myosin is a hexamer of 2 heavy chains and 4 light chains. In terms of tissue distribution, expressed in fetal skeletal muscle and retina.

The protein is Myosin light chain 5 (MYL5) of Homo sapiens (Human).